Here is a 410-residue protein sequence, read N- to C-terminus: Argininosuccinate synthase (410 aa).

Residues 10 to 18 (AYSGGLDTS) and Ala-37 contribute to the ATP site. L-citrulline is bound by residues Tyr-90 and Ser-95. Gly-120 is an ATP binding site. Residues Thr-122, Asn-126, and Asp-127 each contribute to the L-aspartate site. Asn-126 is a binding site for L-citrulline. Positions 130, 182, 191, 267, and 279 each coordinate L-citrulline.

This sequence belongs to the argininosuccinate synthase family. Type 1 subfamily. In terms of assembly, homotetramer.

Its subcellular location is the cytoplasm. It catalyses the reaction L-citrulline + L-aspartate + ATP = 2-(N(omega)-L-arginino)succinate + AMP + diphosphate + H(+). It participates in amino-acid biosynthesis; L-arginine biosynthesis; L-arginine from L-ornithine and carbamoyl phosphate: step 2/3. This chain is Argininosuccinate synthase, found in Polynucleobacter necessarius subsp. necessarius (strain STIR1).